Here is a 219-residue protein sequence, read N- to C-terminus: Uracil-DNA glycosylase (219 aa).

Aspartate 62 serves as the catalytic Proton acceptor.

Belongs to the uracil-DNA glycosylase (UDG) superfamily. UNG family.

The protein resides in the cytoplasm. It catalyses the reaction Hydrolyzes single-stranded DNA or mismatched double-stranded DNA and polynucleotides, releasing free uracil.. Its function is as follows. Excises uracil residues from the DNA which can arise as a result of misincorporation of dUMP residues by DNA polymerase or due to deamination of cytosine. The protein is Uracil-DNA glycosylase of Lactococcus lactis subsp. cremoris (strain MG1363).